A 168-amino-acid polypeptide reads, in one-letter code: GTP-dependent dephospho-CoA kinase (168 aa).

GTP contacts are provided by Asp-40, Val-41, Val-42, Asp-59, and Glu-112.

This sequence belongs to the GTP-dependent DPCK family.

It carries out the reaction 3'-dephospho-CoA + GTP = GDP + CoA + H(+). Its pathway is cofactor biosynthesis; coenzyme A biosynthesis. Functionally, catalyzes the GTP-dependent phosphorylation of the 3'-hydroxyl group of dephosphocoenzyme A to form coenzyme A (CoA). The sequence is that of GTP-dependent dephospho-CoA kinase from Methanoregula boonei (strain DSM 21154 / JCM 14090 / 6A8).